The chain runs to 105 residues: uncharacterized protein (105 aa).

The interval 58–105 is disordered; it reads YRKKKPNHSRDNPRINSNLSTNYAQAKSVERSRSNSLNSGPNPLENAT. Composition is skewed to polar residues over residues 71-82 and 91-105; these read RINSNLSTNYAQ and SNSLNSGPNPLENAT.

Its subcellular location is the mitochondrion. This is an uncharacterized protein from Arabidopsis thaliana (Mouse-ear cress).